The following is a 490-amino-acid chain: Tegument protein VP16 (490 aa).

The interval 12–37 (MDADGASPPPPRPAGGPKNTPAAPPL) is disordered. Phosphoserine is present on residues serine 18, serine 353, serine 411, and serine 452. The tract at residues 411–490 (STAPPTDVSL…DALGIDEYGG (80 aa)) is transcriptional activation.

Belongs to the herpesviridae tegument protein VP16 protein family. As to quaternary structure, interacts with VP22. Interacts with gH (via C-terminus). Interacts with the virion host shutoff protein (vhs). Interacts with VP11/12. Associates with the VP16-induced complex; binding to host HCFC1 activates VP16 for association with the octamer motif-binding host protein POU2F1, to form a multiprotein-DNA complex responsible for activating transcription of the viral immediate early genes.

The protein resides in the virion tegument. It is found in the host nucleus. Transcriptional activator of immediate-early (IE) gene products (alpha genes). Acts as a key activator of lytic infection by initiating the lytic program through the assembly of the transcriptional regulatory VP16-induced complex composed of VP16 and two cellular factors, HCFC1 and POU2F 1. VP16-induced complex represents a regulatory switch: when it is on, it promotes IE-gene expression and thus lytic infection, and when it is off, it limits IE-gene transcription favoring latent infection. In terms of biological role, may play a role in the aggregation of tegument proteins around nucleocapsids during virus morphogenesis. The protein is Tegument protein VP16 of Homo sapiens (Human).